The sequence spans 308 residues: Eukaryotic translation initiation factor 3 subunit G-B (308 aa).

Disordered stretches follow at residues 1-35 and 176-227; these read MPTG…KQDP and STAD…DDNA. Over residues 185–194 the composition is skewed to low complexity; sequence GAEPEPAQAP. A compositionally biased stretch (basic and acidic residues) spans 209 to 227; sequence GGSRRGESMQPNRRADDNA. The RRM domain maps to 227-305; the sequence is ATIRVTNLSE…LILNVEWAKP (79 aa).

This sequence belongs to the eIF-3 subunit G family. In terms of assembly, component of the eukaryotic translation initiation factor 3 (eIF-3) complex, which is composed of 13 subunits: eif3a, eif3b, eif3c, eif3d, eif3e, eif3f, eif3g, eif3h, eif3i, eif3j, eif3k, eif3l and eif3m.

It localises to the cytoplasm. In terms of biological role, RNA-binding component of the eukaryotic translation initiation factor 3 (eIF-3) complex, which is involved in protein synthesis of a specialized repertoire of mRNAs and, together with other initiation factors, stimulates binding of mRNA and methionyl-tRNAi to the 40S ribosome. The eIF-3 complex specifically targets and initiates translation of a subset of mRNAs involved in cell proliferation. This subunit can bind 18S rRNA. This chain is Eukaryotic translation initiation factor 3 subunit G-B (eif3g-b), found in Xenopus laevis (African clawed frog).